Consider the following 150-residue polypeptide: MELNTKNFGIIHYNEEDVIYFEEGIPGFEELHNFLIIGDEEEDMPFKWLQSIDNPDIAFVVIDPRVFKPDYTFEIDEELKNFLAVEDVNHLLIFVIVVIPEKIEEMTANLKAPIIINAENNRGVQIILDNDKYLIKHPILEELKNAYSHA.

The protein belongs to the FliW family. As to quaternary structure, interacts with translational regulator CsrA and flagellin(s).

It is found in the cytoplasm. Its function is as follows. Acts as an anti-CsrA protein, binds CsrA and prevents it from repressing translation of its target genes, one of which is flagellin. Binds to flagellin and participates in the assembly of the flagellum. This Caldanaerobacter subterraneus subsp. tengcongensis (strain DSM 15242 / JCM 11007 / NBRC 100824 / MB4) (Thermoanaerobacter tengcongensis) protein is Flagellar assembly factor FliW.